We begin with the raw amino-acid sequence, 151 residues long: Transcriptional regulator MraZ (151 aa).

SpoVT-AbrB domains lie at 5-51 (AHEL…PVAE) and 81-124 (AEIL…GREQ).

The protein belongs to the MraZ family. In terms of assembly, forms oligomers.

The protein resides in the cytoplasm. Its subcellular location is the nucleoid. The chain is Transcriptional regulator MraZ from Neisseria gonorrhoeae (strain ATCC 700825 / FA 1090).